The primary structure comprises 110 residues: Large ribosomal subunit protein uL22 (110 aa).

The protein belongs to the universal ribosomal protein uL22 family. As to quaternary structure, part of the 50S ribosomal subunit.

In terms of biological role, this protein binds specifically to 23S rRNA; its binding is stimulated by other ribosomal proteins, e.g. L4, L17, and L20. It is important during the early stages of 50S assembly. It makes multiple contacts with different domains of the 23S rRNA in the assembled 50S subunit and ribosome. The globular domain of the protein is located near the polypeptide exit tunnel on the outside of the subunit, while an extended beta-hairpin is found that lines the wall of the exit tunnel in the center of the 70S ribosome. The protein is Large ribosomal subunit protein uL22 of Pasteurella multocida (strain Pm70).